A 443-amino-acid polypeptide reads, in one-letter code: Chromosomal replication initiator protein DnaA (443 aa).

Residues 1 to 73 (MYGDYRQIWE…YDAASKVTNR (73 aa)) are domain I, interacts with DnaA modulators. The tract at residues 73–106 (RFIEIKILSEDEEEYREIKESIERENSSESTLLS) is domain II. Positions 107 to 323 (TLNPKYTFDT…GALIRIVAFA (217 aa)) are domain III, AAA+ region. ATP-binding residues include Gly-151, Gly-153, Lys-154, and Thr-155. Positions 324–443 (TLTKSNIDLE…EELKKRIKGY (120 aa)) are domain IV, binds dsDNA.

It belongs to the DnaA family. In terms of assembly, oligomerizes as a right-handed, spiral filament on DNA at oriC.

The protein resides in the cytoplasm. Plays an essential role in the initiation and regulation of chromosomal replication. ATP-DnaA binds to the origin of replication (oriC) to initiate formation of the DNA replication initiation complex once per cell cycle. Binds the DnaA box (a 9 base pair repeat at the origin) and separates the double-stranded (ds)DNA. Forms a right-handed helical filament on oriC DNA; dsDNA binds to the exterior of the filament while single-stranded (ss)DNA is stabiized in the filament's interior. The ATP-DnaA-oriC complex binds and stabilizes one strand of the AT-rich DNA unwinding element (DUE), permitting loading of DNA polymerase. After initiation quickly degrades to an ADP-DnaA complex that is not apt for DNA replication. Binds acidic phospholipids. This Caldanaerobacter subterraneus subsp. tengcongensis (strain DSM 15242 / JCM 11007 / NBRC 100824 / MB4) (Thermoanaerobacter tengcongensis) protein is Chromosomal replication initiator protein DnaA.